A 489-amino-acid chain; its full sequence is uncharacterized protein (489 aa).

One can recognise a 2Fe-2S ferredoxin-type domain in the interval 2–84; sequence IKITVKRFNG…GMIIEPLRGF (83 aa). Residues C48, C53, C56, and C68 each contribute to the [2Fe-2S] cluster site. 2 4Fe-4S ferredoxin-type domains span residues 123 to 155 and 177 to 205; these read KYVE…YPGP and TAYF…IVHR. C134, C137, C140, C144, C186, C189, C192, and C196 together coordinate [4Fe-4S] cluster.

Belongs to the succinate dehydrogenase/fumarate reductase iron-sulfur protein family.

This is an uncharacterized protein from Methanocaldococcus jannaschii (strain ATCC 43067 / DSM 2661 / JAL-1 / JCM 10045 / NBRC 100440) (Methanococcus jannaschii).